Consider the following 247-residue polypeptide: Agamous-like MADS-box protein AGL28 (247 aa).

Residues 6–66 (LGRRKIELVK…GKAYSFGHPN (61 aa)) form the MADS-box domain. A coiled-coil region spans residues 91 to 168 (TKLRIQMLNE…VDEKVAQLHH (78 aa)).

Expressed in roots, leaves and shoot apices.

It localises to the nucleus. In terms of biological role, probable transcription factor that may function as a floral promoter operating upstream of known floral activators in the autonomous pathway. This Arabidopsis thaliana (Mouse-ear cress) protein is Agamous-like MADS-box protein AGL28.